The sequence spans 589 residues: Probable cytochrome P450 49a1 (589 aa).

Residues 56-90 (TGESSNPKKLNVSQQPVTSVATTRTTASSLPAETT) form a disordered region. The segment covering 57-71 (GESSNPKKLNVSQQP) has biased composition (polar residues). Over residues 72–84 (VTSVATTRTTASS) the composition is skewed to low complexity. Residue cysteine 536 coordinates heme.

This sequence belongs to the cytochrome P450 family. Heme is required as a cofactor.

Its subcellular location is the endoplasmic reticulum membrane. The protein localises to the microsome membrane. Functionally, may be involved in the metabolism of insect hormones and in the breakdown of synthetic insecticides. This chain is Probable cytochrome P450 49a1 (Cyp49a1), found in Drosophila melanogaster (Fruit fly).